A 516-amino-acid chain; its full sequence is Levanbiose-producing levanase (516 aa).

The Cytoplasmic segment spans residues 1-5 (MNYIK). A helical membrane pass occupies residues 6 to 26 (AGKWLTVFLTFLGILLFIDLF). The Extracellular segment spans residues 27–516 (PKEEHDQKTK…TVKHFDSIHE (490 aa)). Residues 55–58 (WKND), 116–117 (WT), 181–182 (RD), Glu230, and Trp318 each bind substrate. Residue Asp58 is part of the active site.

Belongs to the glycosyl hydrolase 32 family.

The protein localises to the cell membrane. The enzyme catalyses Hydrolysis of (2-&gt;6)-beta-D-fructofuranan, to remove successive disaccharide residues as levanbiose, i.e. 6-(beta-D-fructofuranosyl)-D-fructose, from the end of the chain.. Catalyzes the degradation of levan mainly into levanbiose (difructose). Is not active on sucrose. The polypeptide is Levanbiose-producing levanase (levB) (Bacillus subtilis (strain 168)).